Reading from the N-terminus, the 406-residue chain is Indole-3-pyruvate monooxygenase YUCCA1 (406 aa).

Residue 21-26 (GAGPSG) coordinates FAD. 184–189 (GCGNSG) is an NADP(+) binding site.

The protein belongs to the FMO family. FAD serves as cofactor. Expressed in coleoptile tips, root tips, leaf blade tips, shoot apical meristem, vasculature of stems and flowers.

The catalysed reaction is indole-3-pyruvate + NADPH + O2 + H(+) = (indol-3-yl)acetate + CO2 + NADP(+) + H2O. Involved in auxin biosynthesis. Converts the indole-3-pyruvic acid (IPA) produced by the TAA family to indole-3-acetic acid (IAA). Functions downstream of TAR2 in auxin biosynthesis. Functions upstream of WOX11, a transcription factor that promotes the development of crown roots. The chain is Indole-3-pyruvate monooxygenase YUCCA1 from Oryza sativa subsp. japonica (Rice).